Reading from the N-terminus, the 342-residue chain is Ketol-acid reductoisomerase (NADP(+)) (342 aa).

The KARI N-terminal Rossmann domain maps to 2 to 181 (VKVYYNGDIK…GGARAGVLET (180 aa)). NADP(+) contacts are provided by residues 25-28 (YGSQ), Arg48, Ser52, and 82-85 (DEQQ). His107 is an active-site residue. NADP(+) is bound at residue Gly133. Residues 182–327 (TFKEETETDL…RKLREMMPFV (146 aa)) enclose the KARI C-terminal knotted domain. Mg(2+)-binding residues include Asp190, Glu194, Glu226, and Glu230. Position 251 (Ser251) interacts with substrate.

This sequence belongs to the ketol-acid reductoisomerase family. The cofactor is Mg(2+).

It catalyses the reaction (2R)-2,3-dihydroxy-3-methylbutanoate + NADP(+) = (2S)-2-acetolactate + NADPH + H(+). The enzyme catalyses (2R,3R)-2,3-dihydroxy-3-methylpentanoate + NADP(+) = (S)-2-ethyl-2-hydroxy-3-oxobutanoate + NADPH + H(+). Its pathway is amino-acid biosynthesis; L-isoleucine biosynthesis; L-isoleucine from 2-oxobutanoate: step 2/4. The protein operates within amino-acid biosynthesis; L-valine biosynthesis; L-valine from pyruvate: step 2/4. Involved in the biosynthesis of branched-chain amino acids (BCAA). Catalyzes an alkyl-migration followed by a ketol-acid reduction of (S)-2-acetolactate (S2AL) to yield (R)-2,3-dihydroxy-isovalerate. In the isomerase reaction, S2AL is rearranged via a Mg-dependent methyl migration to produce 3-hydroxy-3-methyl-2-ketobutyrate (HMKB). In the reductase reaction, this 2-ketoacid undergoes a metal-dependent reduction by NADPH to yield (R)-2,3-dihydroxy-isovalerate. This is Ketol-acid reductoisomerase (NADP(+)) from Bacillus subtilis (strain 168).